Here is a 446-residue protein sequence, read N- to C-terminus: Phosphoglucosamine mutase (446 aa).

Catalysis depends on S101, which acts as the Phosphoserine intermediate. Mg(2+) is bound by residues S101, D240, D242, and D244. S101 carries the phosphoserine modification.

The protein belongs to the phosphohexose mutase family. Mg(2+) serves as cofactor. In terms of processing, activated by phosphorylation.

The catalysed reaction is alpha-D-glucosamine 1-phosphate = D-glucosamine 6-phosphate. In terms of biological role, catalyzes the conversion of glucosamine-6-phosphate to glucosamine-1-phosphate. This is Phosphoglucosamine mutase from Coxiella burnetii (strain Dugway 5J108-111).